The chain runs to 1733 residues: ATP-binding cassette sub-family A member 17 (1733 aa).

7 helical membrane passes run 22–42 (TLIT…VLYL), 262–282 (FPLL…NSVL), 306–326 (AWFI…TVLF), 342–362 (TLIF…AFMM), 372–392 (GTVI…YITF), 403–423 (ILSC…ISLF), and 444–464 (FAQV…IAFL). The ABC transporter 1 domain maps to 519–752 (IEIQHLYKVF…YGAGYYMTII (234 aa)). 555–562 (GHNGAGKT) lines the ATP pocket. The N-linked (GlcNAc...) asparagine glycan is linked to Asn609. 7 consecutive transmembrane segments (helical) span residues 906–926 (LVLS…LTFF), 1082–1102 (LVVN…ILTV), 1128–1148 (LLWD…VFLW), 1160–1180 (IPAV…LVYT), 1192–1212 (CVKL…LVTV), 1230–1250 (IFLI…YYNF), and 1287–1307 (IGKY…MLFL). In terms of domain architecture, ABC transporter 2 spans 1366–1599 (LVVKEVSKVY…FGISYSLQAK (234 aa)). ATP is bound at residue 1401-1408 (GLNGAGKT). Residues 1681-1692 (ESSTKEQIQQEQ) show a composition bias toward polar residues. A disordered region spans residues 1681-1733 (ESSTKEQIQQEQAVLASPSPPSNSRPISSPPSRLSSPTPKPLPSPPPSEPILL). Residues 1704-1717 (SRPISSPPSRLSSP) are compositionally biased toward low complexity. Positions 1718 to 1733 (TPKPLPSPPPSEPILL) are enriched in pro residues.

The protein belongs to the ABC transporter superfamily. ABCA family. In terms of processing, N-glycosylated. In the testis, detected predominantly in elongated spermatids at the late stage of germ cell development and in sperm, with no expression detected in immature germ cells such as spermatogonia and spermatocytes or in somatic cells such as Sertoli cells (at protein level). Expressed in the head and tail midpiece of elongated spermatids and sperm (at protein level). Expressed exclusively in the testis.

Its subcellular location is the endoplasmic reticulum membrane. It localises to the cytoplasm. The catalysed reaction is cholesterol(in) + ATP + H2O = cholesterol(out) + ADP + phosphate + H(+). Functionally, promotes cholesterol efflux from sperm which renders sperm capable of fertilization. Has also been shown to decrease levels of intracellular esterified neutral lipids including cholesteryl esters, fatty acid esters and triacylglycerols. The sequence is that of ATP-binding cassette sub-family A member 17 from Mus musculus (Mouse).